An 84-amino-acid polypeptide reads, in one-letter code: M-zodatoxin-Lt2a (84 aa).

The N-terminal stretch at 1–22 is a signal peptide; sequence MKYFVIALALAVALVCIAESTA. Residues 23 to 58 constitute a propeptide that is removed on maturation; the sequence is YEVNEELENELDDLDDAAWLAVAEELQGLEDFEESR. The short motif at 55–58 is the Processing quadruplet motif element; sequence EESR.

Cleavage of the propeptide depends on the processing quadruplet motif (XXXR, with at least one of X being E). As to expression, expressed by the venom gland.

It localises to the secreted. In terms of biological role, it has antimicrobial activity against Gram-positive bacteria (A.globiformis VKM Ac-1112 (MIC=0.7 uM), and B.subtilis VKM B-501 (MIC=0.4 uM)), Gram-negative bacteria (E.coli DH5-alpha (MIC=1.0 uM), E.coli MH1 (MIC=0.7 uM), and P.aeruginosa PAO1 (MIC=6.7 uM)), and yeasts (P.pastoris GS115 (MIC=6.7 uM), and S.cerevisiae Y190 (MIC=54 uM)). Also has a strong hemolytic activity against rabbit erythrocytes. Causes paralysis, but is not lethal when injected into insect (M.domestica) larvae. This chain is M-zodatoxin-Lt2a, found in Lachesana tarabaevi (Spider).